Here is a 368-residue protein sequence, read N- to C-terminus: Ribosomal RNA large subunit methyltransferase M (368 aa).

S-adenosyl-L-methionine is bound by residues Ser189, 222 to 225 (CPGG), Asp241, Asp261, and Asp278. Residue Lys307 is the Proton acceptor of the active site.

This sequence belongs to the class I-like SAM-binding methyltransferase superfamily. RNA methyltransferase RlmE family. RlmM subfamily. Monomer.

It localises to the cytoplasm. The catalysed reaction is cytidine(2498) in 23S rRNA + S-adenosyl-L-methionine = 2'-O-methylcytidine(2498) in 23S rRNA + S-adenosyl-L-homocysteine + H(+). Functionally, catalyzes the 2'-O-methylation at nucleotide C2498 in 23S rRNA. The polypeptide is Ribosomal RNA large subunit methyltransferase M (Yersinia pseudotuberculosis serotype O:1b (strain IP 31758)).